An 85-amino-acid polypeptide reads, in one-letter code: Insecticidal toxin Vn1 (85 aa).

A signal peptide spans M1–S23. A disulfide bond links C71 and C84.

Highly expressed in the venom apparatus, and weakly expressed in residual body.

It is found in the secreted. Its function is as follows. Endoparasitoid venom toxin that exhibits insecticidal activity against Tenebrio molitor pupae. Impacts genes related to immune response, environmental information processing, metabolism, and response to external stimuli in T.molitor, suggesting its involvement in the intricate parasitoid wasp-host interaction. The polypeptide is Insecticidal toxin Vn1 (Aphidius gifuensis (Parasitoid wasp)).